A 124-amino-acid chain; its full sequence is Large ribosomal subunit protein bL19 (124 aa).

The protein belongs to the bacterial ribosomal protein bL19 family.

In terms of biological role, this protein is located at the 30S-50S ribosomal subunit interface and may play a role in the structure and function of the aminoacyl-tRNA binding site. The protein is Large ribosomal subunit protein bL19 of Acidiphilium cryptum (strain JF-5).